Consider the following 489-residue polypeptide: Metal cation symporter ZIP14 (489 aa).

Residues M1–A28 form the signal peptide. Over S29 to G155 the chain is Extracellular. N52, N75, N85, and N100 each carry an N-linked (GlcNAc...) asparagine glycan. The helical transmembrane segment at F156–M176 threads the bilayer. Residues K177–L184 lie on the Cytoplasmic side of the membrane. A helical transmembrane segment spans residues L185–I205. At P206 to S221 the chain is on the extracellular side. A helical membrane pass occupies residues A222–L242. Over K243–G349 the chain is Cytoplasmic. Residues H248 to F255 carry the HHHGHXHX-motif motif. The helical transmembrane segment at L350–I370 threads the bilayer. Over L371–Q394 the chain is Extracellular. The XEXPHE-motif motif lies at E373–E378. Residues A395–L415 form a helical membrane-spanning segment. Over A416 to S421 the chain is Cytoplasmic. A helical membrane pass occupies residues A422–F442. The Extracellular segment spans residues P443–S457. The chain crosses the membrane as a helical span at residues F458–V478. The Cytoplasmic segment spans residues L479–G489.

It belongs to the ZIP transporter (TC 2.A.5) family. Homotrimer. Ubiquitinated. Ubiquitination occurs upon iron depletion. The ubiquitinated form undergoes proteasomal degradation. In terms of processing, N-glycosylated. N-glycosylation at Asn-100 is required for iron-regulated extraction of the transporter from membranes and subsequent proteasomal degradation. As to expression, widely expressed. Highly and transiently expressed during the early stage of adipocyte differentiation. Strongly expressed in liver, preadipocyte, duodenum and jejunum, moderately in brain, heart, skeletal muscle, spleen, pancreas, kidney and white adipose cells. Expression is almost undetectable in lung, testis and brown adipose cells. Expressed by chondrocytes and pituitary cells. In terms of tissue distribution, more strongly expressed in brain. More strongly expressed in liver, kidney and duodenum.

Its subcellular location is the cell membrane. It localises to the apical cell membrane. It is found in the basolateral cell membrane. The protein resides in the early endosome membrane. The protein localises to the late endosome membrane. Its subcellular location is the lysosome membrane. It catalyses the reaction Zn(2+)(out) + 2 hydrogencarbonate(out) = Zn(2+)(in) + 2 hydrogencarbonate(in). The catalysed reaction is Mn(2+)(out) + 2 hydrogencarbonate(out) = Mn(2+)(in) + 2 hydrogencarbonate(in). It carries out the reaction Fe(2+)(out) + 2 hydrogencarbonate(out) = Fe(2+)(in) + 2 hydrogencarbonate(in). The enzyme catalyses Cd(2+)(out) + 2 hydrogencarbonate(out) = Cd(2+)(in) + 2 hydrogencarbonate(in). Its activity is regulated as follows. Inhibited by cyanide and therefore dependent of an energy source. Inhibited by DIDS/4,4'-diisothiocyanatostilbene-2,2'-disulfonic acid, an inhibitor hydrogencarbonate-dependent transporters. In terms of biological role, electroneutral transporter of the plasma membrane mediating the cellular uptake of the divalent metal cations zinc, manganese and iron that are important for tissue homeostasis, metabolism, development and immunity. Functions as an energy-dependent symporter, transporting through the membranes an electroneutral complex composed of a divalent metal cation and two bicarbonate anions. Beside these endogenous cellular substrates, can also import cadmium a non-essential metal which is cytotoxic and carcinogenic. Controls the cellular uptake by the intestinal epithelium of systemic zinc, which is in turn required to maintain tight junctions and the intestinal permeability. Modifies the activity of zinc-dependent phosphodiesterases, thereby indirectly regulating G protein-coupled receptor signaling pathways important for gluconeogenesis and chondrocyte differentiation. Regulates insulin receptor signaling, glucose uptake, glycogen synthesis and gluconeogenesis in hepatocytes through the zinc-dependent intracellular catabolism of insulin. Through zinc cellular uptake also plays a role in the adaptation of cells to endoplasmic reticulum stress. Major manganese transporter of the basolateral membrane of intestinal epithelial cells, it plays a central role in manganese systemic homeostasis through intestinal manganese uptake. Also involved in manganese extracellular uptake by cells of the blood-brain barrier. May also play a role in manganese and zinc homeostasis participating in their elimination from the blood through the hepatobiliary excretion. Also functions in the extracellular uptake of free iron. May also function intracellularly and mediate the transport from endosomes to cytosol of iron endocytosed by transferrin. Plays a role in innate immunity by regulating the expression of cytokines by activated macrophages. The chain is Metal cation symporter ZIP14 from Mus musculus (Mouse).